The chain runs to 1199 residues: DNA-directed RNA polymerase subunit beta' (1199 aa).

Zn(2+)-binding residues include Cys60, Cys62, Cys75, and Cys78. Mg(2+) contacts are provided by Asp449, Asp451, and Asp453. 4 residues coordinate Zn(2+): Cys818, Cys892, Cys899, and Cys902.

Belongs to the RNA polymerase beta' chain family. In terms of assembly, the RNAP catalytic core consists of 2 alpha, 1 beta, 1 beta' and 1 omega subunit. When a sigma factor is associated with the core the holoenzyme is formed, which can initiate transcription. It depends on Mg(2+) as a cofactor. Requires Zn(2+) as cofactor.

It catalyses the reaction RNA(n) + a ribonucleoside 5'-triphosphate = RNA(n+1) + diphosphate. Its function is as follows. DNA-dependent RNA polymerase catalyzes the transcription of DNA into RNA using the four ribonucleoside triphosphates as substrates. In Exiguobacterium sibiricum (strain DSM 17290 / CCUG 55495 / CIP 109462 / JCM 13490 / 255-15), this protein is DNA-directed RNA polymerase subunit beta'.